The following is a 338-amino-acid chain: Starch-binding domain-containing protein 1 (338 aa).

Residues 1-6 lie on the Extracellular side of the membrane; it reads MGAVWS. The helical transmembrane segment at 7 to 23 threads the bilayer; the sequence is ALLVGGGLAGALILWLL. Residues 24–338 lie on the Cytoplasmic side of the membrane; sequence RGDSGAPGKD…KVVHGWWGIH (315 aa). Disordered regions lie at residues 30 to 73 and 120 to 148; these read PGKD…RELV and KIPD…WRLP. The span at 36 to 52 shows a compositional bias: low complexity; it reads AEPPQKGAPPGEAAAPG. The segment covering 53-62 has biased composition (gly residues); it reads DGPGGGGSGG. At serine 68 the chain carries Phosphoserine. Residues 122-132 are compositionally biased toward basic and acidic residues; it reads PDTHSRADSEA. Phosphoserine is present on residues serine 140, serine 167, and serine 179. Positions 185-191 match the LIR motif; that stretch reads HEDWEVV. 7 positions are modified to phosphoserine: serine 195, serine 196, serine 205, serine 209, serine 212, serine 220, and serine 223. Positions 238–337 constitute a CBM20 domain; that stretch reads SLKPQQVSIQ…DKVVHGWWGI (100 aa).

In terms of assembly, interacts with the ATG8 family proteins GABARAP and GABARAPL1. Interacts with several glycogen-associated proteins, such as GYS2 (liver glycogen synthase), GDE (glycogen debranching enzyme), GBE1 (glycogen branching enzyme 1) and EPM2A (Laforin). Post-translationally, ubiquitinated, which leads to proteasomal degradation. Expressed at high level in glycogen-accumulating organs such as muscle and liver. Trace signals are also found in brain, kidney, and pancreas.

It is found in the preautophagosomal structure membrane. It localises to the endoplasmic reticulum membrane. The protein localises to the cell membrane. The protein resides in the sarcolemma. Its subcellular location is the T-tubule. In terms of biological role, acts as a cargo receptor for glycogen. Delivers its cargo to an autophagic pathway called glycophagy, resulting in the transport of glycogen to lysosomes. This chain is Starch-binding domain-containing protein 1, found in Mus musculus (Mouse).